Consider the following 228-residue polypeptide: Ribonuclease 3 (228 aa).

The RNase III domain maps to 8–130; the sequence is LKRLERRVDY…IIGAAFLDSD (123 aa). Glutamate 43 lines the Mg(2+) pocket. Residue aspartate 47 is part of the active site. Aspartate 116 and glutamate 119 together coordinate Mg(2+). Glutamate 119 is an active-site residue. In terms of domain architecture, DRBM spans 157–226; it reads DPKTRLQEHL…ANKMLDSLSG (70 aa).

It belongs to the ribonuclease III family. As to quaternary structure, homodimer. It depends on Mg(2+) as a cofactor.

It localises to the cytoplasm. The catalysed reaction is Endonucleolytic cleavage to 5'-phosphomonoester.. Digests double-stranded RNA. Involved in the processing of primary rRNA transcript to yield the immediate precursors to the large and small rRNAs (23S and 16S). Processes some mRNAs, and tRNAs when they are encoded in the rRNA operon. Processes pre-crRNA and tracrRNA of type II CRISPR loci if present in the organism. The sequence is that of Ribonuclease 3 from Psychromonas ingrahamii (strain DSM 17664 / CCUG 51855 / 37).